We begin with the raw amino-acid sequence, 137 residues long: Small ribosomal subunit protein uS12 (137 aa).

Disordered stretches follow at residues 1-22 (MPTI…SKSP) and 35-57 (ATNN…TPKK). Residues 9-18 (RKPRKSKVSK) show a composition bias toward basic residues. 3-methylthioaspartic acid is present on D102.

The protein belongs to the universal ribosomal protein uS12 family. In terms of assembly, part of the 30S ribosomal subunit. Contacts proteins S8 and S17. May interact with IF1 in the 30S initiation complex.

Functionally, with S4 and S5 plays an important role in translational accuracy. Its function is as follows. Interacts with and stabilizes bases of the 16S rRNA that are involved in tRNA selection in the A site and with the mRNA backbone. Located at the interface of the 30S and 50S subunits, it traverses the body of the 30S subunit contacting proteins on the other side and probably holding the rRNA structure together. The combined cluster of proteins S8, S12 and S17 appears to hold together the shoulder and platform of the 30S subunit. The sequence is that of Small ribosomal subunit protein uS12 from Leuconostoc mesenteroides subsp. mesenteroides (strain ATCC 8293 / DSM 20343 / BCRC 11652 / CCM 1803 / JCM 6124 / NCDO 523 / NBRC 100496 / NCIMB 8023 / NCTC 12954 / NRRL B-1118 / 37Y).